Reading from the N-terminus, the 247-residue chain is Probable transcriptional regulatory protein ETA_14870 (247 aa).

The interval Met1–Lys20 is disordered.

The protein belongs to the TACO1 family.

It localises to the cytoplasm. This is Probable transcriptional regulatory protein ETA_14870 from Erwinia tasmaniensis (strain DSM 17950 / CFBP 7177 / CIP 109463 / NCPPB 4357 / Et1/99).